Consider the following 175-residue polypeptide: Large ribosomal subunit protein uL6 (175 aa).

The protein belongs to the universal ribosomal protein uL6 family. Part of the 50S ribosomal subunit.

Its function is as follows. This protein binds to the 23S rRNA, and is important in its secondary structure. It is located near the subunit interface in the base of the L7/L12 stalk, and near the tRNA binding site of the peptidyltransferase center. In Xylella fastidiosa (strain M12), this protein is Large ribosomal subunit protein uL6.